An 84-amino-acid chain; its full sequence is Cell division topological specificity factor (84 aa).

Belongs to the MinE family.

In terms of biological role, prevents the cell division inhibition by proteins MinC and MinD at internal division sites while permitting inhibition at polar sites. This ensures cell division at the proper site by restricting the formation of a division septum at the midpoint of the long axis of the cell. The sequence is that of Cell division topological specificity factor from Ralstonia pickettii (strain 12J).